Here is a 269-residue protein sequence, read N- to C-terminus: Surfeit locus protein 4 (269 aa).

The next 6 helical transmembrane spans lie at 64–84 (FLAS…CILV), 92–112 (YACF…SILW), 157–177 (MQLG…HFDM), 179–199 (FFYI…AIGF), 203–223 (LAAL…NAFW), and 242–262 (TMSV…GVSM). Positions 266–269 (KKEW) match the Di-lysine motif motif.

It belongs to the SURF4 family.

The protein resides in the endoplasmic reticulum membrane. It localises to the endoplasmic reticulum-Golgi intermediate compartment membrane. It is found in the golgi apparatus membrane. Endoplasmic reticulum cargo receptor that mediates the export of lipoproteins by recruiting cargos into COPII vesicles to facilitate their secretion. Acts as a cargo receptor for lipoproteins bearing both APOB and APOA1, thereby regulating lipoprotein delivery and the maintenance of lipid homeostasis. This chain is Surfeit locus protein 4, found in Gallus gallus (Chicken).